The sequence spans 446 residues: Alpha-1,6-mannosyl-glycoprotein 2-beta-N-acetylglucosaminyltransferase (446 aa).

Residues 1 to 9 (MRFRIYKRK) lie on the Cytoplasmic side of the membrane. A helical; Signal-anchor for type II membrane protein transmembrane segment spans residues 10–29 (VLILTFVVAACGFVLWSSNG). Residues 30 to 446 (RQRKNEALAP…ELCKSYRRLQ (417 aa)) are Lumenal-facing. 2 N-linked (GlcNAc...) asparagine glycosylation sites follow: N69 and N86. Substrate is bound by residues 123 to 127 (QVHNR) and D154. The cysteines at positions 196 and 210 are disulfide-linked. 229-233 (QTKHH) contributes to the substrate binding site. Residue D261 participates in Mn(2+) binding. Cysteines 283 and 286 form a disulfide. R298 contributes to the substrate binding site. 3 cysteine pairs are disulfide-bonded: C334/C357, C339/C439, and C378/C386. H374 provides a ligand contact to Mn(2+).

It belongs to the glycosyltransferase 16 (GT16) protein family. In terms of assembly, homodimer. Requires Mn(2+) as cofactor.

It is found in the golgi apparatus membrane. It catalyses the reaction an N(4)-{beta-D-GlcNAc-(1-&gt;2)-alpha-D-Man-(1-&gt;3)-[alpha-D-Man-(1-&gt;6)]-beta-D-Man-(1-&gt;4)-beta-D-GlcNAc-(1-&gt;4)-beta-D-GlcNAc}-L-asparaginyl-[protein] + UDP-N-acetyl-alpha-D-glucosamine = N(4)-{beta-D-GlcNAc-(1-&gt;2)-alpha-D-Man-(1-&gt;3)-[beta-D-GlcNAc-(1-&gt;2)-alpha-D-Man-(1-&gt;6)]-beta-D-Man-(1-&gt;4)-beta-D-GlcNAc-(1-&gt;4)-beta-D-GlcNAc}-L-asparaginyl-[protein] + UDP + H(+). The protein operates within protein modification; protein glycosylation. Functionally, plays an essential role in protein N-glycosylation. Catalyzes the transfer of N-acetylglucosamine (GlcNAc) onto the free terminal mannose moiety in the core structure of the nascent N-linked glycan chain, giving rise to the second branch in complex glycans. The polypeptide is Alpha-1,6-mannosyl-glycoprotein 2-beta-N-acetylglucosaminyltransferase (MGAT2) (Sus scrofa (Pig)).